The primary structure comprises 181 residues: Adenylate kinase (181 aa).

10–15 is a binding site for ATP; sequence GAGKGT. The interval 30 to 59 is NMP; sequence STGDLFRYNISNGTELGLEAKKYLDAGDLV. AMP is bound by residues threonine 31, arginine 36, 57 to 59, 85 to 88, and glutamine 92; these read DLV and GYPR. The LID stretch occupies residues 126 to 132; the sequence is GRGRDDD. Arginine 127 is an ATP binding site. The AMP site is built by arginine 129 and arginine 140. Glycine 166 serves as a coordination point for ATP.

Belongs to the adenylate kinase family. In terms of assembly, monomer.

The protein resides in the cytoplasm. The catalysed reaction is AMP + ATP = 2 ADP. It participates in purine metabolism; AMP biosynthesis via salvage pathway; AMP from ADP: step 1/1. In terms of biological role, catalyzes the reversible transfer of the terminal phosphate group between ATP and AMP. Plays an important role in cellular energy homeostasis and in adenine nucleotide metabolism. This is Adenylate kinase from Mycolicibacterium vanbaalenii (strain DSM 7251 / JCM 13017 / BCRC 16820 / KCTC 9966 / NRRL B-24157 / PYR-1) (Mycobacterium vanbaalenii).